A 632-amino-acid chain; its full sequence is Nucleoside triphosphatase I (632 aa).

The 163-residue stretch at F42–K204 folds into the Helicase ATP-binding domain. H55–T62 contributes to the ATP binding site. The short motif at D141–H144 is the DEXH box element. Residues K367 to K532 enclose the Helicase C-terminal domain. The tract at residues D457–F524 is binding to the cap-specific mRNA (nucleoside-2'-O-)-methyltransferase.

It belongs to the helicase family. NPH I subfamily. In terms of assembly, monomer. Interacts (via C-terminus) with RAP94 (via N-terminus). Interacts with the cap-specific mRNA (nucleoside-2'-O-)-methyltransferase.

The protein resides in the virion. It catalyses the reaction a ribonucleoside 5'-triphosphate + H2O = a ribonucleoside 5'-diphosphate + phosphate + H(+). Its function is as follows. DNA-dependent ATPase required for providing the needed energy to achieve the termination of early transcripts. Acts in concert with the RAP94 subunit of the virion RNA polymerase and the capping enzyme/VTF to catalyze release of UUUUUNU-containing nascent RNA from the elongation complex. NPH-I must bind ssDNA in order to exhibit ATPase activity. In Myxoma virus (strain Lausanne) (MYXV), this protein is Nucleoside triphosphatase I (NPH1).